The chain runs to 1007 residues: Lysosomal alpha-mannosidase (1007 aa).

Low complexity-rich tracts occupy residues 1–10 (MGADARPLGV) and 19–28 (AARPGTSSRA). The tract at residues 1–30 (MGADARPLGVRAGGGGRGAARPGTSSRALP) is disordered. The N-terminal stretch at 1–50 (MGADARPLGVRAGGGGRGAARPGTSSRALPPPLPPLSFLLLLLAAPGARA) is a signal peptide. Cystine bridges form between C56–C360 and C269–C274. Zn(2+)-binding residues include H73 and D75. N134 carries an N-linked (GlcNAc...) asparagine glycan. Zn(2+) is bound at residue D197. D197 acts as the Nucleophile in catalysis. N-linked (GlcNAc...) asparagine glycosylation is found at N311, N347, and N369. 2 disulfide bridges follow: C414-C474 and C495-C503. H448 is a Zn(2+) binding site. Residues N499, N543, N643, N649, N690, N764, and N927 are each glycosylated (N-linked (GlcNAc...) asparagine).

This sequence belongs to the glycosyl hydrolase 38 family. It depends on Zn(2+) as a cofactor. Processed into 3 peptides of 72 kDa, 41 kDa and 12 kDa.

The protein resides in the lysosome. It catalyses the reaction Hydrolysis of terminal, non-reducing alpha-D-mannose residues in alpha-D-mannosides.. Necessary for the catabolism of N-linked carbohydrates released during glycoprotein turnover. The sequence is that of Lysosomal alpha-mannosidase (MAN2B1) from Felis catus (Cat).